The following is a 348-amino-acid chain: MTAPSQVLKIRRPDDWHLHLRDGDMLKTVVPYTSEIYGRAIVMPNLAPPVTTVEAAVAYRQRILDAVPAGHDFTPLMTCYLTDSLDPNELERGFNEGVFTAAKLYPANATTNSSHGVTSVDAIMPILERMEKIGMPLLVHGEVTHADIDIFDREARFIESVMEPLRQRLTALKVVFEHITTKDAADYVRDGNERLAATITPQHLMFNRNHMLVGGVRPHLYCLPILKRNIHQQALRELVASGFNRVFLGTDSAPHARHRKESSCGCAGCFNAPTALGSYATVFEEMNALQHFEAFCSVNGPQFYGLPVNDTFIELVREEQQVAESIALTDDTLVPFLAGETVRWSVKQ.

Zn(2+) contacts are provided by histidine 17 and histidine 19. Residues 19 to 21 and asparagine 45 contribute to the substrate site; that span reads HLR. The Zn(2+) site is built by lysine 103, histidine 140, and histidine 178. Lysine 103 carries the post-translational modification N6-carboxylysine. Histidine 140 lines the substrate pocket. Residue leucine 223 coordinates substrate. Position 251 (aspartate 251) interacts with Zn(2+). Aspartate 251 is an active-site residue. 2 residues coordinate substrate: histidine 255 and alanine 267.

Belongs to the metallo-dependent hydrolases superfamily. DHOase family. Class II DHOase subfamily. Homodimer. The cofactor is Zn(2+).

The enzyme catalyses (S)-dihydroorotate + H2O = N-carbamoyl-L-aspartate + H(+). It participates in pyrimidine metabolism; UMP biosynthesis via de novo pathway; (S)-dihydroorotate from bicarbonate: step 3/3. In terms of biological role, catalyzes the reversible cyclization of carbamoyl aspartate to dihydroorotate. This is Dihydroorotase from Escherichia coli O6:K15:H31 (strain 536 / UPEC).